Here is a 97-residue protein sequence, read N- to C-terminus: Acylphosphatase (97 aa).

Residues Arg-5–Phe-92 enclose the Acylphosphatase-like domain. Catalysis depends on residues Arg-20 and Asn-38.

Belongs to the acylphosphatase family.

It catalyses the reaction an acyl phosphate + H2O = a carboxylate + phosphate + H(+). This chain is Acylphosphatase (acyP), found in Syntrophobacter fumaroxidans (strain DSM 10017 / MPOB).